The primary structure comprises 221 residues: Histidine biosynthesis bifunctional protein HisIE (221 aa).

Residues 1–129 (MAYSKNFSIE…AKKTSPFSNI (129 aa)) form a phosphoribosyl-AMP cyclohydrolase region. A phosphoribosyl-ATP pyrophosphohydrolase region spans residues 130-221 (CSELFDTLHE…VLESRRGKNN (92 aa)).

It in the N-terminal section; belongs to the PRA-CH family. The protein in the C-terminal section; belongs to the PRA-PH family.

The protein resides in the cytoplasm. It catalyses the reaction 1-(5-phospho-beta-D-ribosyl)-ATP + H2O = 1-(5-phospho-beta-D-ribosyl)-5'-AMP + diphosphate + H(+). The enzyme catalyses 1-(5-phospho-beta-D-ribosyl)-5'-AMP + H2O = 1-(5-phospho-beta-D-ribosyl)-5-[(5-phospho-beta-D-ribosylamino)methylideneamino]imidazole-4-carboxamide. Its pathway is amino-acid biosynthesis; L-histidine biosynthesis; L-histidine from 5-phospho-alpha-D-ribose 1-diphosphate: step 2/9. The protein operates within amino-acid biosynthesis; L-histidine biosynthesis; L-histidine from 5-phospho-alpha-D-ribose 1-diphosphate: step 3/9. This is Histidine biosynthesis bifunctional protein HisIE from Prochlorococcus marinus subsp. pastoris (strain CCMP1986 / NIES-2087 / MED4).